We begin with the raw amino-acid sequence, 463 residues long: Argininosuccinate lyase (463 aa).

This sequence belongs to the lyase 1 family. Argininosuccinate lyase subfamily.

Its subcellular location is the cytoplasm. The catalysed reaction is 2-(N(omega)-L-arginino)succinate = fumarate + L-arginine. It functions in the pathway amino-acid biosynthesis; L-arginine biosynthesis; L-arginine from L-ornithine and carbamoyl phosphate: step 3/3. This Methylorubrum extorquens (strain CM4 / NCIMB 13688) (Methylobacterium extorquens) protein is Argininosuccinate lyase.